A 94-amino-acid chain; its full sequence is Aspartyl/glutamyl-tRNA(Asn/Gln) amidotransferase subunit C (94 aa).

This sequence belongs to the GatC family. Heterotrimer of A, B and C subunits.

It catalyses the reaction L-glutamyl-tRNA(Gln) + L-glutamine + ATP + H2O = L-glutaminyl-tRNA(Gln) + L-glutamate + ADP + phosphate + H(+). The catalysed reaction is L-aspartyl-tRNA(Asn) + L-glutamine + ATP + H2O = L-asparaginyl-tRNA(Asn) + L-glutamate + ADP + phosphate + 2 H(+). In terms of biological role, allows the formation of correctly charged Asn-tRNA(Asn) or Gln-tRNA(Gln) through the transamidation of misacylated Asp-tRNA(Asn) or Glu-tRNA(Gln) in organisms which lack either or both of asparaginyl-tRNA or glutaminyl-tRNA synthetases. The reaction takes place in the presence of glutamine and ATP through an activated phospho-Asp-tRNA(Asn) or phospho-Glu-tRNA(Gln). The protein is Aspartyl/glutamyl-tRNA(Asn/Gln) amidotransferase subunit C of Desulfotalea psychrophila (strain LSv54 / DSM 12343).